The primary structure comprises 449 residues: Capsid protein (449 aa).

The segment at 1 to 43 is DNA-binding; the sequence is MARRARRPRGRFYAFRRGRWHHLKRLRRRYKFRHRRRQRYRRR. The tract at residues 6–47 is nuclear localization signals; the sequence is RRPRGRFYAFRRGRWHHLKRLRRRYKFRHRRRQRYRRRAFRK.

Belongs to the gyrovirus capsid protein family. In terms of assembly, homomultimer (Potential). Interacts with Rep; this interaction relocates Rep into the nucleus.

It is found in the host nucleus. It localises to the virion. Functionally, self-assembles to form the virion icosahedral capsid with a T=1 symmetry. This very small capsid (25 nm in diameter) allows the virus to be very stable in the environment and resistant to some disinfectants, including detergents. Essential for the initial attachment to host receptors. After attachment, the virus is endocytosed and traffics to the nucleus. The capsid protein binds and transports the viral genome and Rep across the nuclear envelope. The protein is Capsid protein (VP1) of Gallus gallus (Chicken).